The following is a 325-amino-acid chain: Tetraacyldisaccharide 4'-kinase (325 aa).

Position 54–61 (54–61 (SVGGTGKT)) interacts with ATP.

The protein belongs to the LpxK family.

The enzyme catalyses a lipid A disaccharide + ATP = a lipid IVA + ADP + H(+). It functions in the pathway glycolipid biosynthesis; lipid IV(A) biosynthesis; lipid IV(A) from (3R)-3-hydroxytetradecanoyl-[acyl-carrier-protein] and UDP-N-acetyl-alpha-D-glucosamine: step 6/6. Functionally, transfers the gamma-phosphate of ATP to the 4'-position of a tetraacyldisaccharide 1-phosphate intermediate (termed DS-1-P) to form tetraacyldisaccharide 1,4'-bis-phosphate (lipid IVA). The sequence is that of Tetraacyldisaccharide 4'-kinase from Rickettsia akari (strain Hartford).